Here is a 239-residue protein sequence, read N- to C-terminus: RNA polymerase sigma factor FliA (239 aa).

The sigma-70 factor domain-2 stretch occupies residues 16 to 88 (LWQRYVPLVR…MLDELRSRDW (73 aa)). The Interaction with polymerase core subunit RpoC signature appears at 43-46 (DLLQ). The sigma-70 factor domain-3 stretch occupies residues 96–166 (NAREVAQAIG…IELVTDDHQR (71 aa)). The sigma-70 factor domain-4 stretch occupies residues 185–233 (AIETLPEREKLVLTLYYQEELNLKEIGAVLEVGESRVSQLHSQAIKRLR). The H-T-H motif DNA-binding region spans 207 to 226 (LKEIGAVLEVGESRVSQLHS).

The protein belongs to the sigma-70 factor family. FliA subfamily.

It is found in the cytoplasm. Sigma factors are initiation factors that promote the attachment of RNA polymerase to specific initiation sites and are then released. This sigma factor controls the expression of flagella-related genes. The sequence is that of RNA polymerase sigma factor FliA from Escherichia coli O157:H7.